A 385-amino-acid polypeptide reads, in one-letter code: Isomaltose glucohydrolase (385 aa).

Residue tryptophan 125 coordinates substrate. The active-site Proton acceptor is aspartate 175. Glutamate 178 acts as the Proton donor in catalysis. Glutamate 335 functions as the Proton acceptor in the catalytic mechanism.

This sequence belongs to the glycosyl hydrolase 15 family.

Its subcellular location is the cytoplasm. The enzyme catalyses isomaltose + H2O = beta-D-glucose + D-glucose. Involved in the intracellular degradation of the cyclic tetrasaccharide cyclobis-(1-6)-alpha-nigerosyl (CNN) formed extracellularly from starch. Catalyzes the hydrolysis of alpha-1,6-glucosidic linkage from the non-reducing end of isomaltose to yield beta-D-glucose and D-glucose. Can also act on panose and isomaltotriose at a lower rate. It displays low or no activity toward CNN and the general GH15 enzyme substrates such as maltose, soluble starch or dextran. This chain is Isomaltose glucohydrolase, found in Kribbella flavida (strain DSM 17836 / JCM 10339 / NBRC 14399).